The following is a 619-amino-acid chain: Dihydroxy-acid dehydratase (619 aa).

Residue Asp-81 coordinates Mg(2+). Cys-122 serves as a coordination point for [2Fe-2S] cluster. 2 residues coordinate Mg(2+): Asp-123 and Lys-124. The residue at position 124 (Lys-124) is an N6-carboxylysine. Residue Cys-198 coordinates [2Fe-2S] cluster. Glu-494 is a Mg(2+) binding site. Residue Ser-520 is the Proton acceptor of the active site.

The protein belongs to the IlvD/Edd family. In terms of assembly, homodimer. Requires [2Fe-2S] cluster as cofactor. Mg(2+) serves as cofactor.

It carries out the reaction (2R)-2,3-dihydroxy-3-methylbutanoate = 3-methyl-2-oxobutanoate + H2O. The enzyme catalyses (2R,3R)-2,3-dihydroxy-3-methylpentanoate = (S)-3-methyl-2-oxopentanoate + H2O. Its pathway is amino-acid biosynthesis; L-isoleucine biosynthesis; L-isoleucine from 2-oxobutanoate: step 3/4. It functions in the pathway amino-acid biosynthesis; L-valine biosynthesis; L-valine from pyruvate: step 3/4. Its function is as follows. Functions in the biosynthesis of branched-chain amino acids. Catalyzes the dehydration of (2R,3R)-2,3-dihydroxy-3-methylpentanoate (2,3-dihydroxy-3-methylvalerate) into 2-oxo-3-methylpentanoate (2-oxo-3-methylvalerate) and of (2R)-2,3-dihydroxy-3-methylbutanoate (2,3-dihydroxyisovalerate) into 2-oxo-3-methylbutanoate (2-oxoisovalerate), the penultimate precursor to L-isoleucine and L-valine, respectively. The sequence is that of Dihydroxy-acid dehydratase from Neisseria meningitidis serogroup C / serotype 2a (strain ATCC 700532 / DSM 15464 / FAM18).